A 183-amino-acid chain; its full sequence is ER membrane protein complex subunit 4 (183 aa).

Threonine 2 is subject to N-acetylthreonine. Residues 2–66 (TAQGGLVANR…VQETDRILVE (65 aa)) are Cytoplasmic-facing. Residues 20-39 (ELSGPGGGSRGRSDRGSGQG) form a disordered region. Serine 36 bears the Phosphoserine mark. Residues 67–87 (KRCWDIALGPLKQIPMNLFIM) traverse the membrane as a helical segment. The Lumenal portion of the chain corresponds to 88 to 98 (YMAGNTISIFP). A helical transmembrane segment spans residues 99-120 (TMMVCMMAWRPIQALMAISATF). The Cytoplasmic portion of the chain corresponds to 121 to 127 (KMLESSS). Residues 128-148 (QKFLQGLVYLIGNLMGLALAV) form a helical membrane-spanning segment. Over 149 to 183 (YKCQSMGLLPTHASDWLAFIEPPERMEFSGGGLLL) the chain is Lumenal.

This sequence belongs to the EMC4 family. In terms of assembly, component of the ER membrane protein complex (EMC). Isoform 1 is expressed in brain and heart. Isoform 2 is expressed in heart.

It localises to the endoplasmic reticulum membrane. Functionally, part of the endoplasmic reticulum membrane protein complex (EMC) that enables the energy-independent insertion into endoplasmic reticulum membranes of newly synthesized membrane proteins. Preferentially accommodates proteins with transmembrane domains that are weakly hydrophobic or contain destabilizing features such as charged and aromatic residues. Involved in the cotranslational insertion of multi-pass membrane proteins in which stop-transfer membrane-anchor sequences become ER membrane spanning helices. It is also required for the post-translational insertion of tail-anchored/TA proteins in endoplasmic reticulum membranes. By mediating the proper cotranslational insertion of N-terminal transmembrane domains in an N-exo topology, with translocated N-terminus in the lumen of the ER, controls the topology of multi-pass membrane proteins like the G protein-coupled receptors. By regulating the insertion of various proteins in membranes, it is indirectly involved in many cellular processes. This is ER membrane protein complex subunit 4 (EMC4) from Homo sapiens (Human).